We begin with the raw amino-acid sequence, 472 residues long: NADH-quinone oxidoreductase subunit N 2 (472 aa).

The next 13 helical transmembrane spans lie at 3–23, 34–54, 67–87, 106–126, 156–176, 198–218, 233–253, 263–283, 291–311, 317–337, 360–380, 398–418, and 441–461; these read WMSF…LLLS, HVAA…SVGA, LFSQ…VTLC, FVCT…VVFI, FLVG…LYGA, VVIG…VFPF, VSAY…VRVI, LVHV…LAAI, LLAY…LSMN, AAVF…LVLV, ILAL…PTVG, TLVL…LLVI, and LLSG…NQII.

It belongs to the complex I subunit 2 family. As to quaternary structure, NDH-1 is composed of 14 different subunits. Subunits NuoA, H, J, K, L, M, N constitute the membrane sector of the complex.

It localises to the cell inner membrane. It catalyses the reaction a quinone + NADH + 5 H(+)(in) = a quinol + NAD(+) + 4 H(+)(out). Functionally, NDH-1 shuttles electrons from NADH, via FMN and iron-sulfur (Fe-S) centers, to quinones in the respiratory chain. The immediate electron acceptor for the enzyme in this species is believed to be ubiquinone. Couples the redox reaction to proton translocation (for every two electrons transferred, four hydrogen ions are translocated across the cytoplasmic membrane), and thus conserves the redox energy in a proton gradient. The chain is NADH-quinone oxidoreductase subunit N 2 from Syntrophobacter fumaroxidans (strain DSM 10017 / MPOB).